The primary structure comprises 695 residues: UvrABC system protein B (695 aa).

A Helicase ATP-binding domain is found at 25–176 (KSILEGHRFQ…NQREVLRDLA (152 aa)). 38–45 (GATGTGKT) contacts ATP. Residues 91–114 (YYDYYQPEAYVPSTDTYIAKSSSI) carry the Beta-hairpin motif. The Helicase C-terminal domain maps to 454-617 (LLGEIYLRLE…ITPKPIIKKN (164 aa)). The 36-residue stretch at 652 to 687 (PELIGQLELKMKAAAKNLEFEEAAQLRDQIKKLRQR) folds into the UVR domain.

The protein belongs to the UvrB family. As to quaternary structure, forms a heterotetramer with UvrA during the search for lesions. Interacts with UvrC in an incision complex.

Its subcellular location is the cytoplasm. The UvrABC repair system catalyzes the recognition and processing of DNA lesions. A damage recognition complex composed of 2 UvrA and 2 UvrB subunits scans DNA for abnormalities. Upon binding of the UvrA(2)B(2) complex to a putative damaged site, the DNA wraps around one UvrB monomer. DNA wrap is dependent on ATP binding by UvrB and probably causes local melting of the DNA helix, facilitating insertion of UvrB beta-hairpin between the DNA strands. Then UvrB probes one DNA strand for the presence of a lesion. If a lesion is found the UvrA subunits dissociate and the UvrB-DNA preincision complex is formed. This complex is subsequently bound by UvrC and the second UvrB is released. If no lesion is found, the DNA wraps around the other UvrB subunit that will check the other stand for damage. This Synechococcus sp. (strain JA-3-3Ab) (Cyanobacteria bacterium Yellowstone A-Prime) protein is UvrABC system protein B.